The sequence spans 163 residues: Deoxyuridine 5'-triphosphate nucleotidohydrolase (163 aa).

This sequence belongs to the dUTPase family. It depends on Mg(2+) as a cofactor.

It catalyses the reaction dUTP + H2O = dUMP + diphosphate + H(+). It participates in pyrimidine metabolism; dUMP biosynthesis; dUMP from dCTP (dUTP route): step 2/2. In terms of biological role, this enzyme is involved in nucleotide metabolism: it produces dUMP, the immediate precursor of thymidine nucleotides and it decreases the intracellular concentration of dUTP so that uracil cannot be incorporated into DNA. The sequence is that of Deoxyuridine 5'-triphosphate nucleotidohydrolase from Galliformes (FAdV-8).